A 195-amino-acid chain; its full sequence is Granulocyte colony-stimulating factor (195 aa).

An N-terminal signal peptide occupies residues 1–21 (MKLMVLQLLLWHSALWTVHEA). Intrachain disulfides connect C57–C63 and C85–C95. T154 carries O-linked (GalNAc...) threonine glycosylation.

This sequence belongs to the IL-6 superfamily. As to quaternary structure, monomer. O-glycosylated.

It localises to the secreted. Granulocyte/macrophage colony-stimulating factors are cytokines that act in hematopoiesis by controlling the production, differentiation, and function of 2 related white cell populations of the blood, the granulocytes and the monocytes-macrophages. This CSF induces granulocytes. In Bos taurus (Bovine), this protein is Granulocyte colony-stimulating factor (CSF3).